A 1007-amino-acid polypeptide reads, in one-letter code: Serine/threonine-protein kinase PRP4 homolog (1007 aa).

Residues 1–10 are compositionally biased toward polar residues; that stretch reads MAAAETQSLR. The tract at residues 1–99 is disordered; sequence MAAAETQSLR…EGMSPAKRTK (99 aa). N-acetylalanine is present on Ala-2. 4 positions are modified to phosphoserine: Ser-8, Ser-20, Ser-23, and Ser-32. 2 stretches are compositionally biased toward basic residues: residues 39 to 59 and 67 to 81; these read KHSRHKKKKHKHRSKHKKHKH and KKHKHKHKHKKHKRK. The segment covering 82 to 91 has biased composition (basic and acidic residues); that stretch reads EIIDASDKEG. A phosphoserine mark is found at Ser-87 and Ser-93. Residue Lys-99 is modified to N6-acetyllysine; alternate. A Glycyl lysine isopeptide (Lys-Gly) (interchain with G-Cter in SUMO2); alternate cross-link involves residue Lys-99. Lys-111 participates in a covalent cross-link: Glycyl lysine isopeptide (Lys-Gly) (interchain with G-Cter in SUMO2). Lys-117 participates in a covalent cross-link: Glycyl lysine isopeptide (Lys-Gly) (interchain with G-Cter in SUMO2); alternate. A Glycyl lysine isopeptide (Lys-Gly) (interchain with G-Cter in SUMO1); alternate cross-link involves residue Lys-117. Ser-131 is subject to Phosphoserine. Tyr-140 carries the phosphotyrosine modification. 2 disordered regions span residues 140 to 533 and 559 to 583; these read YESG…EEED and SNMSVPSEPSSPQSSTRTRSPSPDD. Ser-142, Ser-144, and Ser-166 each carry phosphoserine. Residues 157–168 show a composition bias toward low complexity; sequence GNRSSTRSSSTK. Residues Lys-170 and Lys-177 each participate in a glycyl lysine isopeptide (Lys-Gly) (interchain with G-Cter in SUMO2) cross-link. Composition is skewed to basic residues over residues 179–202 and 214–230; these read TTKKRSKSRSKERTRHRSDKKKSK and RSKSKERKKSKSPSKRS. Ser-239, Ser-241, Ser-257, Ser-277, Ser-283, Ser-292, and Ser-294 each carry phosphoserine. A compositionally biased stretch (basic and acidic residues) spans 247-270; sequence RSQEKIGKARSPTDDKVKIEDKSK. The span at 302-315 shows a compositional bias: basic residues; it reads SKDRRSRSKERKSK. Basic and acidic residues predominate over residues 316–325; the sequence is RSETDKEKKP. Phosphoserine occurs at positions 328, 354, 356, 366, and 368. Residues 342–367 show a composition bias toward basic residues; sequence PSRRPGRSPKRRSLSPKPRDKSRRSR. Thr-385 is modified (phosphothreonine). At Ser-387 the chain carries Phosphoserine. 2 stretches are compositionally biased toward basic and acidic residues: residues 395–408 and 415–429; these read RSLERKRREPERRR and RPRDDILSRRERSKD. 3 positions are modified to phosphoserine: Ser-427, Ser-431, and Ser-437. Residues 438 to 497 are compositionally biased toward basic residues; that stretch reads PTRRRSRSPIRRRSRSPLRRSRSPRRRSRSPRRRDRGRRSRSRLRRRSRSRGGRRRRSRS. Residues Ser-518, Ser-519, Ser-520, Ser-565, Ser-569, Ser-578, and Ser-580 each carry the phosphoserine modification. Residues 518-533 are compositionally biased toward acidic residues; it reads SSSDDNLEDFDVEEED. Over residues 562-581 the composition is skewed to low complexity; that stretch reads SVPSEPSSPQSSTRTRSPSP. Residues Lys-593 and Lys-659 each participate in a glycyl lysine isopeptide (Lys-Gly) (interchain with G-Cter in SUMO2) cross-link. One can recognise a Protein kinase domain in the interval 687-1006; that stretch reads YNVYGYTGQG…ALQHAFIQEK (320 aa). Residues 693-701 and Lys-717 each bind ATP; that span reads TGQGVFSNV. Lys-717 bears the N6-acetyllysine mark. Residue Asp-815 is the Proton acceptor of the active site. Tyr-849 carries the post-translational modification Phosphotyrosine. Phosphoserine is present on Ser-852.

Belongs to the protein kinase superfamily. CMGC Ser/Thr protein kinase family. As to quaternary structure, interacts with CLK1 C-terminus. Associates with the U5 snRNP and NCOR1 deacetylase complexes. Identified in the spliceosome C complex. Post-translationally, phosphorylated by CLK1. Autophosphorylated; phosphorylation inhibits interaction with its targets, such as PRPF6 or SMARCA4. In terms of tissue distribution, ubiquitous.

Its subcellular location is the nucleus. It is found in the chromosome. It localises to the centromere. The protein localises to the kinetochore. It catalyses the reaction L-seryl-[protein] + ATP = O-phospho-L-seryl-[protein] + ADP + H(+). The enzyme catalyses L-threonyl-[protein] + ATP = O-phospho-L-threonyl-[protein] + ADP + H(+). Its function is as follows. Serine/threonine kinase involved in spliceosomal assembly as well as mitosis and signaling regulation. Connects chromatin mediated regulation of transcription and pre-mRNA splicing. During spliceosomal assembly, interacts with and phosphorylates PRPF6 and PRPF31, components of the U4/U6-U5 tri-small nuclear ribonucleoprotein (snRNP), to facilitate the formation of the spliceosome B complex. Plays a role in regulating transcription and the spindle assembly checkpoint (SAC). Associates with U5 snRNP and NCOR1 deacetylase complexes which may allow a coordination of pre-mRNA splicing with chromatin remodeling events involved in transcriptional regulation. Associates and probably phosphorylates SMARCA4 and NCOR1. Phosphorylates SRSF1. Associates with kinetochores during mitosis and is necessary for recruitment and maintenance of the checkpoint proteins such as MAD1L1 and MAD12L1 at the kinetochores. Phosphorylates and regulates the activity of the transcription factors such as ELK1 and KLF13. Phosphorylates nuclear YAP1 and WWTR1/TAZ which induces nuclear exclusion and regulates Hippo signaling pathway, involved in tissue growth control. The sequence is that of Serine/threonine-protein kinase PRP4 homolog from Homo sapiens (Human).